We begin with the raw amino-acid sequence, 170 residues long: Centrin-2 (170 aa).

The interval 1–21 (MQRGALRGASPTARRRLVDRP) is disordered. EF-hand domains are found at residues 26–61 (DEIE…LGFE), 62–97 (TKNP…KLGD), 99–134 (ESRE…LGET), and 135–170 (MSED…KTFP). Ca(2+)-binding residues include Asp-39, Asp-41, Ser-43, Met-45, and Glu-50.

This sequence belongs to the centrin family. As to quaternary structure, monomer. Does not homooligomerize.

The protein localises to the cytoplasm. The protein resides in the cytoskeleton. It localises to the microtubule organizing center. Its subcellular location is the centrosome. In terms of biological role, in tachyzoites, plays an essential role in microneme secretion that ensures parasite motility and attachment to, invasion of and egress from host cells. Also involved in the architecture of the peripheral annuli where it appears to regulate the localization of PAP2. In association with the myosin motor MyoJ, involved in the constriction of the basal complex at the end of daughter cell division in an actin-dependent manner; the basal complex is a cytoskeletal structure formed at the tachyzoite basal pole during daughter cell formation. May be involved in parasite replication. The polypeptide is Centrin-2 (Toxoplasma gondii (strain ATCC 50611 / Me49)).